The following is a 558-amino-acid chain: Germacrene A synthase short form (558 aa).

The Mg(2+) site is built by Asp311, Asp315, Asp455, Thr459, and Glu463. The DDXXD motif signature appears at Asp311–Asp315.

The protein belongs to the terpene synthase family. Requires Mg(2+) as cofactor. Expressed in roots and in green and etiolated seedlings.

The enzyme catalyses (2E,6E)-farnesyl diphosphate = (+)-(R)-germacrene A + diphosphate. It participates in secondary metabolite biosynthesis; terpenoid biosynthesis. Involved in sesquiterpene lactone biosynthesis. Produces exclusively (+)-germacrene A. The protein is Germacrene A synthase short form of Cichorium intybus (Chicory).